The following is a 149-amino-acid chain: MTQTEFKHRIRISKTDLEGKNPLEYALQDMKGIGRAMARAVIRVTELDPKQQAGYLADEDVLKIESVLEDPATHGIPSWMFNRKKDVYSGLDKHLIETDLVLTVQEDITNMKKIRCYKGIRHELRLPCRGQRTRGSFRKGTSMGVKRKK.

This sequence belongs to the universal ribosomal protein uS13 family. Part of the 30S ribosomal subunit. Forms a loose heterodimer with protein S19. Forms two bridges to the 50S subunit in the 70S ribosome.

Functionally, located at the top of the head of the 30S subunit, it contacts several helices of the 16S rRNA. In the 70S ribosome it contacts the 23S rRNA (bridge B1a) and protein L5 of the 50S subunit (bridge B1b), connecting the 2 subunits; these bridges are implicated in subunit movement. This Methanococcus maripaludis (strain DSM 14266 / JCM 13030 / NBRC 101832 / S2 / LL) protein is Small ribosomal subunit protein uS13.